A 179-amino-acid polypeptide reads, in one-letter code: Transthyretin-like protein 46 (179 aa).

The N-terminal stretch at 1–17 (MNKLFVLLIALLGLTAA) is a signal peptide. Residues 144–179 (RRGGFNADYMDPDNSEKDQSKSSEESEDKEKTVETF) form a disordered region. Positions 157–179 (NSEKDQSKSSEESEDKEKTVETF) are enriched in basic and acidic residues.

Belongs to the nematode transthyretin-like family.

The protein localises to the secreted. This is Transthyretin-like protein 46 (ttr-46) from Caenorhabditis elegans.